Here is a 254-residue protein sequence, read N- to C-terminus: Splicing factor tls1 (254 aa).

Residues 69–83 are compositionally biased toward basic and acidic residues; it reads KEKQLNTANEPHEAN. 2 disordered regions span residues 69 to 90 and 195 to 216; these read KEKQLNTANEPHEANDQTSAQS and RKRQKKRARMKEKLDSKALRTS. Over residues 195-204 the composition is skewed to basic residues; sequence RKRQKKRARM. Positions 205 to 216 are enriched in basic and acidic residues; the sequence is KEKLDSKALRTS.

It belongs to the TLS1 family. As to quaternary structure, component of the spliceosome. Interacts with brr2.

Its subcellular location is the cytoplasm. The protein resides in the nucleus. In terms of biological role, plays a role in pre-mRNA splicing by facilitating excision of introns featuring long spacing between the branchpoint and 3'-splice site. Assists the splicing of several components involved in chromatin organization, such as several shelterin complex subunits. This chain is Splicing factor tls1, found in Schizosaccharomyces pombe (strain 972 / ATCC 24843) (Fission yeast).